A 242-amino-acid polypeptide reads, in one-letter code: Polycomb group RING finger protein 3 (242 aa).

Residues 17–56 (CRLCSGYLIDATTVTECLHTFCRSCLVKYLEENNTCPTCR) form an RING-type zinc finger. The disordered stretch occupies residues 115 to 149 (AKQHLDSHRNGETKADDSSNKEAAEEKPEEDNDYH). Residues 117-140 (QHLDSHRNGETKADDSSNKEAAEE) are compositionally biased toward basic and acidic residues. Positions 132-242 (SSNKEAAEEK…LHYRPKMDLL (111 aa)) are interaction with BCORL1.

In terms of assembly, component of a PRC1-like complex that contains PCGF3, RNF2 and RYBP. Interacts with CBX6, CBX7 and CBX8. Interacts with BCORL1.

It localises to the nucleus. Its subcellular location is the nucleoplasm. In terms of biological role, component of a Polycomb group (PcG) multiprotein PRC1-like complex, a complex class required to maintain the transcriptionally repressive state of many genes, including Hox genes, throughout development. PcG PRC1 complex acts via chromatin remodeling and modification of histones; it mediates monoubiquitination of histone H2A 'Lys-119', rendering chromatin heritably changed in its expressibility. Within the PRC1-like complex, regulates RNF2 ubiquitin ligase activity. Plays a redundant role with PCGF5 as part of a PRC1-like complex that mediates monoubiquitination of histone H2A 'Lys-119' on the X chromosome and is required for normal silencing of one copy of the X chromosome in XX females. The polypeptide is Polycomb group RING finger protein 3 (PCGF3) (Homo sapiens (Human)).